The chain runs to 237 residues: Exosome complex component Rrp4 (237 aa).

Positions 72 to 144 (GHIVVGKVVD…LSKDPVLTIK (73 aa)) constitute an S1 motif domain. The KH domain occupies 152 to 211 (PRGTLVEIPPQKVPRVIGRRGSMVSMIEDLLGVKLIVGQNGRIVVVGDDPQRVEIAVLAV).

The protein belongs to the RRP4 family. Component of the archaeal exosome complex. Forms a trimer of Rrp4 and/or Csl4 subunits. The trimer associates with a hexameric ring-like arrangement composed of 3 Rrp41-Rrp42 heterodimers.

The protein localises to the cytoplasm. In terms of biological role, non-catalytic component of the exosome, which is a complex involved in RNA degradation. Increases the RNA binding and the efficiency of RNA degradation. Confers strong poly(A) specificity to the exosome. The protein is Exosome complex component Rrp4 of Thermofilum pendens (strain DSM 2475 / Hrk 5).